The following is a 150-amino-acid chain: Ribonuclease K6 (150 aa).

An N-terminal signal peptide occupies residues 1 to 23 (MVLCFPLLLLLLVLWGPVCLLHA). The active-site Proton acceptor is the His38. 4 disulfide bridges follow: Cys46–Cys104, Cys60–Cys114, Cys78–Cys129, and Cys85–Cys92. An N-linked (GlcNAc...) asparagine glycan is attached at Asn55. Substrate contacts are provided by residues 61–65 (KHQNT) and Lys86. N-linked (GlcNAc...) asparagine glycosylation occurs at Asn100. Substrate is bound at residue Arg105. His145 acts as the Proton donor in catalysis.

Belongs to the pancreatic ribonuclease family. In terms of assembly, interacts (via N-terminus) with bacterial lipopolysaccharide (LPS).

The protein localises to the secreted. Its subcellular location is the lysosome. It localises to the cytoplasmic granule. In terms of biological role, ribonuclease which shows a preference for the pyrimidines uridine and cytosine. Has potent antibacterial activity against a range of Gram-positive and Gram-negative bacteria, including P.aeruginosa, A.baumanii, M.luteus, S.aureus, E.faecalis, E.faecium, S.saprophyticus and E.coli. Causes loss of bacterial membrane integrity, and also promotes agglutination of Gram-negative bacteria. Probably contributes to urinary tract sterility. Bactericidal activity is independent of RNase activity. This Macaca mulatta (Rhesus macaque) protein is Ribonuclease K6 (RNASE6).